A 938-amino-acid polypeptide reads, in one-letter code: Kinesin-like protein KIN-7B (938 aa).

In terms of domain architecture, Kinesin motor spans 29–348 (KILVTVRMRP…LSFAMSAKEV (320 aa)). 113–120 (GQTSSGKT) provides a ligand contact to ATP. Residues 357 to 431 (VVSEKKLLKH…DLERKAKERK (75 aa)) adopt a coiled-coil conformation. The disordered stretch occupies residues 450-481 (TKEESIPSKSVPSSRRTARDRRKDNVRQSLTS). Residues 555–590 (KANLKEEINRLNSQEIAALEKKLECVQNTIDMLVSS) are a coiled coil. A disordered region spans residues 628–678 (CSPLSGTENKDPESNVVSANSAPVSFGATPPKRDDNRCRTQSREGTPVSRQ). The span at 641–652 (SNVVSANSAPVS) shows a compositional bias: low complexity. Positions 658-669 (PKRDDNRCRTQS) are enriched in basic and acidic residues.

The protein belongs to the TRAFAC class myosin-kinesin ATPase superfamily. Kinesin family. KIN-7 subfamily. In terms of assembly, interacts with ANP3. Interacts with TIO/FU. Expressed in roots, stems, flowers, pollen mother cells and embryos.

The protein localises to the cytoplasm. The protein resides in the cytoskeleton. Its subcellular location is the phragmoplast. Its function is as follows. Probable plus end-directed motor protein that functions in the NACK-PQR (ANP3-MKK6-MPK4) MAP kinase signaling pathway, which is essential for somatic cell cytokinesis, especially for the cell-plate formation and its expansion. May regulate the activity and the localization of ANP3, probably by association through the non-catalytic region of the kinase. Functionally redundant with NACK1 and essential to promote the progression of cytokinesis and for cellularization (formation of the cell plate) during microgametogenesis and megagametogenesis. This chain is Kinesin-like protein KIN-7B, found in Arabidopsis thaliana (Mouse-ear cress).